A 248-amino-acid polypeptide reads, in one-letter code: tRNA pseudouridine synthase A 2 (248 aa).

Asp55 functions as the Nucleophile in the catalytic mechanism. Tyr113 serves as a coordination point for substrate.

The protein belongs to the tRNA pseudouridine synthase TruA family. In terms of assembly, homodimer.

It catalyses the reaction uridine(38/39/40) in tRNA = pseudouridine(38/39/40) in tRNA. Its function is as follows. Formation of pseudouridine at positions 38, 39 and 40 in the anticodon stem and loop of transfer RNAs. This is tRNA pseudouridine synthase A 2 from Clostridium tetani (strain Massachusetts / E88).